A 318-amino-acid chain; its full sequence is Methionyl-tRNA formyltransferase (318 aa).

Position 112–115 (112–115) interacts with (6S)-5,6,7,8-tetrahydrofolate; it reads SILP.

Belongs to the Fmt family.

It catalyses the reaction L-methionyl-tRNA(fMet) + (6R)-10-formyltetrahydrofolate = N-formyl-L-methionyl-tRNA(fMet) + (6S)-5,6,7,8-tetrahydrofolate + H(+). Attaches a formyl group to the free amino group of methionyl-tRNA(fMet). The formyl group appears to play a dual role in the initiator identity of N-formylmethionyl-tRNA by promoting its recognition by IF2 and preventing the misappropriation of this tRNA by the elongation apparatus. The polypeptide is Methionyl-tRNA formyltransferase (Shewanella baltica (strain OS185)).